We begin with the raw amino-acid sequence, 289 residues long: Protease HtpX homolog (289 aa).

2 helical membrane passes run 9 to 29 (TGVLMAFLTALLVGIGYLIGG) and 31 to 51 (GGMIIAFTIALFMNLISYWFS). His-133 provides a ligand contact to Zn(2+). Residue Glu-134 is part of the active site. Zn(2+) is bound at residue His-137. 2 consecutive transmembrane segments (helical) span residues 143–163 (TLIQTLAAVLAGAIMILVDFA) and 182–202 (IGLILAIVLAPLAATLIQLAI). Glu-207 lines the Zn(2+) pocket.

The protein belongs to the peptidase M48B family. It depends on Zn(2+) as a cofactor.

It localises to the cell membrane. The protein is Protease HtpX homolog of Pyrococcus abyssi (strain GE5 / Orsay).